Consider the following 225-residue polypeptide: Octanoyltransferase (225 aa).

The BPL/LPL catalytic domain occupies 42-219; the sequence is KNRQASMIFC…SICSALEYIN (178 aa). Residues 79–86, 149–151, and 162–164 contribute to the substrate site; these read RGGKITWH, AIG, and GFA. The active-site Acyl-thioester intermediate is cysteine 180.

Belongs to the LipB family.

Its subcellular location is the cytoplasm. It catalyses the reaction octanoyl-[ACP] + L-lysyl-[protein] = N(6)-octanoyl-L-lysyl-[protein] + holo-[ACP] + H(+). Its pathway is protein modification; protein lipoylation via endogenous pathway; protein N(6)-(lipoyl)lysine from octanoyl-[acyl-carrier-protein]: step 1/2. Functionally, catalyzes the transfer of endogenously produced octanoic acid from octanoyl-acyl-carrier-protein onto the lipoyl domains of lipoate-dependent enzymes. Lipoyl-ACP can also act as a substrate although octanoyl-ACP is likely to be the physiological substrate. The sequence is that of Octanoyltransferase from Tropheryma whipplei (strain TW08/27) (Whipple's bacillus).